Reading from the N-terminus, the 78-residue chain is Large ribosomal subunit protein bL28 (78 aa).

Belongs to the bacterial ribosomal protein bL28 family.

The protein is Large ribosomal subunit protein bL28 of Trichormus variabilis (strain ATCC 29413 / PCC 7937) (Anabaena variabilis).